The primary structure comprises 430 residues: Trigger factor (430 aa).

The 86-residue stretch at 157 to 242 (GDLVALETWS…AVEVSEPVLP (86 aa)) folds into the PPIase FKBP-type domain.

This sequence belongs to the FKBP-type PPIase family. Tig subfamily.

The protein resides in the cytoplasm. It carries out the reaction [protein]-peptidylproline (omega=180) = [protein]-peptidylproline (omega=0). Functionally, involved in protein export. Acts as a chaperone by maintaining the newly synthesized protein in an open conformation. Functions as a peptidyl-prolyl cis-trans isomerase. This Xanthomonas oryzae pv. oryzae (strain MAFF 311018) protein is Trigger factor.